Here is a 38-residue protein sequence, read N- to C-terminus: Photosystem II reaction center protein Y (38 aa).

Residues 4-22 form a helical membrane-spanning segment; that stretch reads TIVVFAPIIAALAWVVFNI.

It belongs to the PsbY family. As to quaternary structure, PSII is composed of 1 copy each of membrane proteins PsbA, PsbB, PsbC, PsbD, PsbE, PsbF, PsbH, PsbI, PsbJ, PsbK, PsbL, PsbM, PsbT, PsbX, PsbY, Psb30/Ycf12, peripheral proteins PsbO, CyanoQ (PsbQ), PsbU, PsbV and a large number of cofactors. It forms dimeric complexes.

The protein resides in the cellular thylakoid membrane. Loosely associated component of the core of photosystem II (PSII), it is not always seen in crystals. PSII is a light-driven water plastoquinone oxidoreductase, using light energy to abstract electrons from H(2)O, generating a proton gradient subsequently used for ATP formation. This chain is Photosystem II reaction center protein Y, found in Prochlorococcus marinus (strain MIT 9215).